The chain runs to 307 residues: N-acetylmuramic acid 6-phosphate etherase 2 (307 aa).

In terms of domain architecture, SIS spans 62–225; that stretch reads ITAAFKQGGR…TTASMIRLGK (164 aa). Glu-90 functions as the Proton donor in the catalytic mechanism. The active site involves Glu-121.

The protein belongs to the GCKR-like family. MurNAc-6-P etherase subfamily. As to quaternary structure, homodimer.

The enzyme catalyses N-acetyl-D-muramate 6-phosphate + H2O = N-acetyl-D-glucosamine 6-phosphate + (R)-lactate. It functions in the pathway amino-sugar metabolism; 1,6-anhydro-N-acetylmuramate degradation. Its pathway is amino-sugar metabolism; N-acetylmuramate degradation. It participates in cell wall biogenesis; peptidoglycan recycling. Specifically catalyzes the cleavage of the D-lactyl ether substituent of MurNAc 6-phosphate, producing GlcNAc 6-phosphate and D-lactate. Together with AnmK, is also required for the utilization of anhydro-N-acetylmuramic acid (anhMurNAc) either imported from the medium or derived from its own cell wall murein, and thus plays a role in cell wall recycling. This is N-acetylmuramic acid 6-phosphate etherase 2 from Vibrio cholerae serotype O1 (strain ATCC 39315 / El Tor Inaba N16961).